Consider the following 553-residue polypeptide: Dihydroxy-acid dehydratase (553 aa).

C49 is a binding site for [2Fe-2S] cluster. D81 contacts Mg(2+). C122 lines the [2Fe-2S] cluster pocket. 2 residues coordinate Mg(2+): D123 and K124. K124 is modified (N6-carboxylysine). Position 194 (C194) interacts with [2Fe-2S] cluster. Residue E444 participates in Mg(2+) binding. S470 (proton acceptor) is an active-site residue.

Belongs to the IlvD/Edd family. Homodimer. The cofactor is [2Fe-2S] cluster. It depends on Mg(2+) as a cofactor.

It catalyses the reaction (2R)-2,3-dihydroxy-3-methylbutanoate = 3-methyl-2-oxobutanoate + H2O. It carries out the reaction (2R,3R)-2,3-dihydroxy-3-methylpentanoate = (S)-3-methyl-2-oxopentanoate + H2O. Its pathway is amino-acid biosynthesis; L-isoleucine biosynthesis; L-isoleucine from 2-oxobutanoate: step 3/4. It functions in the pathway amino-acid biosynthesis; L-valine biosynthesis; L-valine from pyruvate: step 3/4. Functionally, functions in the biosynthesis of branched-chain amino acids. Catalyzes the dehydration of (2R,3R)-2,3-dihydroxy-3-methylpentanoate (2,3-dihydroxy-3-methylvalerate) into 2-oxo-3-methylpentanoate (2-oxo-3-methylvalerate) and of (2R)-2,3-dihydroxy-3-methylbutanoate (2,3-dihydroxyisovalerate) into 2-oxo-3-methylbutanoate (2-oxoisovalerate), the penultimate precursor to L-isoleucine and L-valine, respectively. This is Dihydroxy-acid dehydratase from Aeropyrum pernix (strain ATCC 700893 / DSM 11879 / JCM 9820 / NBRC 100138 / K1).